A 307-amino-acid chain; its full sequence is UDP-N-acetylenolpyruvoylglucosamine reductase (307 aa).

An FAD-binding PCMH-type domain is found at arginine 29–glycine 197. Residue arginine 176 is part of the active site. The active-site Proton donor is serine 227. Residue glutamate 297 is part of the active site.

It belongs to the MurB family. Requires FAD as cofactor.

It localises to the cytoplasm. It carries out the reaction UDP-N-acetyl-alpha-D-muramate + NADP(+) = UDP-N-acetyl-3-O-(1-carboxyvinyl)-alpha-D-glucosamine + NADPH + H(+). Its pathway is cell wall biogenesis; peptidoglycan biosynthesis. In terms of biological role, cell wall formation. The polypeptide is UDP-N-acetylenolpyruvoylglucosamine reductase (Prochlorococcus marinus (strain MIT 9313)).